A 255-amino-acid chain; its full sequence is Methylthioribulose-1-phosphate dehydratase (255 aa).

Cys-98 contacts substrate. The Zn(2+) site is built by His-116 and His-118. The active-site Proton donor/acceptor is the Glu-150. His-207 is a binding site for Zn(2+).

The protein belongs to the aldolase class II family. MtnB subfamily. It depends on Zn(2+) as a cofactor.

The protein resides in the cytoplasm. It carries out the reaction 5-(methylsulfanyl)-D-ribulose 1-phosphate = 5-methylsulfanyl-2,3-dioxopentyl phosphate + H2O. The protein operates within amino-acid biosynthesis; L-methionine biosynthesis via salvage pathway; L-methionine from S-methyl-5-thio-alpha-D-ribose 1-phosphate: step 2/6. Functionally, catalyzes the dehydration of methylthioribulose-1-phosphate (MTRu-1-P) into 2,3-diketo-5-methylthiopentyl-1-phosphate (DK-MTP-1-P). In Pyricularia oryzae (strain 70-15 / ATCC MYA-4617 / FGSC 8958) (Rice blast fungus), this protein is Methylthioribulose-1-phosphate dehydratase.